A 426-amino-acid polypeptide reads, in one-letter code: Adenylosuccinate synthetase (426 aa).

GTP contacts are provided by residues 13-19 and 41-43; these read GDEGKGK and GHT. The active-site Proton acceptor is D14. Residues D14 and G41 each coordinate Mg(2+). Residues 14 to 17, 39 to 42, T129, R143, Q224, T239, and R303 each bind IMP; these read DEGK and NAGH. H42 functions as the Proton donor in the catalytic mechanism. 299–305 is a binding site for substrate; that stretch reads TTTGRPR. GTP is bound by residues R305, 331–333, and 414–416; these read KLD and GTG.

Belongs to the adenylosuccinate synthetase family. Homodimer. The cofactor is Mg(2+).

It localises to the cytoplasm. The enzyme catalyses IMP + L-aspartate + GTP = N(6)-(1,2-dicarboxyethyl)-AMP + GDP + phosphate + 2 H(+). It participates in purine metabolism; AMP biosynthesis via de novo pathway; AMP from IMP: step 1/2. Its function is as follows. Plays an important role in the de novo pathway of purine nucleotide biosynthesis. Catalyzes the first committed step in the biosynthesis of AMP from IMP. In Caldicellulosiruptor bescii (strain ATCC BAA-1888 / DSM 6725 / KCTC 15123 / Z-1320) (Anaerocellum thermophilum), this protein is Adenylosuccinate synthetase.